The primary structure comprises 98 residues: Large ribosomal subunit protein uL23 (98 aa).

Belongs to the universal ribosomal protein uL23 family. As to quaternary structure, part of the 50S ribosomal subunit. Contacts protein L29, and trigger factor when it is bound to the ribosome.

Functionally, one of the early assembly proteins it binds 23S rRNA. One of the proteins that surrounds the polypeptide exit tunnel on the outside of the ribosome. Forms the main docking site for trigger factor binding to the ribosome. The chain is Large ribosomal subunit protein uL23 from Methylorubrum populi (strain ATCC BAA-705 / NCIMB 13946 / BJ001) (Methylobacterium populi).